The primary structure comprises 406 residues: Enoyl-[acyl-carrier-protein] reductase [NADH] (406 aa).

NAD(+) is bound by residues 48-53 (GASTGF), 74-75 (FE), 111-112 (DA), and 140-141 (IA). Residue Y226 participates in substrate binding. Y236 acts as the Proton donor in catalysis. Residues K245 and 275-277 (LVT) each bind NAD(+).

This sequence belongs to the TER reductase family. In terms of assembly, monomer.

It carries out the reaction a 2,3-saturated acyl-[ACP] + NAD(+) = a (2E)-enoyl-[ACP] + NADH + H(+). The protein operates within lipid metabolism; fatty acid biosynthesis. Involved in the final reduction of the elongation cycle of fatty acid synthesis (FAS II). Catalyzes the reduction of a carbon-carbon double bond in an enoyl moiety that is covalently linked to an acyl carrier protein (ACP). This Coxiella burnetii (strain CbuK_Q154) (Coxiella burnetii (strain Q154)) protein is Enoyl-[acyl-carrier-protein] reductase [NADH].